A 397-amino-acid polypeptide reads, in one-letter code: Formate-dependent phosphoribosylglycinamide formyltransferase (397 aa).

N(1)-(5-phospho-beta-D-ribosyl)glycinamide is bound by residues 22 to 23 (EL) and Glu-82. ATP is bound by residues Arg-114, Lys-155, 160–165 (SSGKGQ), 195–198 (EGFV), and Glu-203. The 194-residue stretch at 119 to 312 (CLAAEELSLP…EFALHARAIL (194 aa)) folds into the ATP-grasp domain. The Mg(2+) site is built by Glu-271 and Glu-283. N(1)-(5-phospho-beta-D-ribosyl)glycinamide contacts are provided by residues Asp-290, Lys-360, and 367 to 368 (RR).

It belongs to the PurK/PurT family. Homodimer.

It carries out the reaction N(1)-(5-phospho-beta-D-ribosyl)glycinamide + formate + ATP = N(2)-formyl-N(1)-(5-phospho-beta-D-ribosyl)glycinamide + ADP + phosphate + H(+). Its pathway is purine metabolism; IMP biosynthesis via de novo pathway; N(2)-formyl-N(1)-(5-phospho-D-ribosyl)glycinamide from N(1)-(5-phospho-D-ribosyl)glycinamide (formate route): step 1/1. Its function is as follows. Involved in the de novo purine biosynthesis. Catalyzes the transfer of formate to 5-phospho-ribosyl-glycinamide (GAR), producing 5-phospho-ribosyl-N-formylglycinamide (FGAR). Formate is provided by PurU via hydrolysis of 10-formyl-tetrahydrofolate. The polypeptide is Formate-dependent phosphoribosylglycinamide formyltransferase (Alcanivorax borkumensis (strain ATCC 700651 / DSM 11573 / NCIMB 13689 / SK2)).